The sequence spans 552 residues: Lon protease 2 (552 aa).

An ATP-binding site is contributed by 97-104; sequence GPPGVGKT. One can recognise a Lon proteolytic domain in the interval 349-535; it reads EPQVGIVNGL…QEVLDEILVN (187 aa). Active-site residues include Ser445 and Lys488.

This sequence belongs to the peptidase S16 family. In terms of assembly, homohexamer. Organized in a ring with a central cavity.

The protein localises to the cytoplasm. The enzyme catalyses Hydrolysis of proteins in presence of ATP.. Functionally, ATP-dependent serine protease that mediates the selective degradation of mutant and abnormal proteins as well as certain short-lived regulatory proteins. Required for cellular homeostasis and for survival from DNA damage and developmental changes induced by stress. Degrades polypeptides processively to yield small peptide fragments that are 5 to 10 amino acids long. Binds to DNA in a double-stranded, site-specific manner. This Bacillus subtilis (strain 168) protein is Lon protease 2 (lon2).